A 240-amino-acid polypeptide reads, in one-letter code: Pyridoxine 5'-phosphate synthase (240 aa).

Residue Asn-7 participates in 3-amino-2-oxopropyl phosphate binding. Position 9–10 (9–10 (DH)) interacts with 1-deoxy-D-xylulose 5-phosphate. Arg-18 is a 3-amino-2-oxopropyl phosphate binding site. Residue His-43 is the Proton acceptor of the active site. 2 residues coordinate 1-deoxy-D-xylulose 5-phosphate: Arg-45 and His-50. Catalysis depends on Glu-70, which acts as the Proton acceptor. Thr-100 is a 1-deoxy-D-xylulose 5-phosphate binding site. His-191 serves as the catalytic Proton donor. Residues Gly-192 and 213–214 (GH) each bind 3-amino-2-oxopropyl phosphate.

The protein belongs to the PNP synthase family. Homooctamer; tetramer of dimers.

Its subcellular location is the cytoplasm. The enzyme catalyses 3-amino-2-oxopropyl phosphate + 1-deoxy-D-xylulose 5-phosphate = pyridoxine 5'-phosphate + phosphate + 2 H2O + H(+). The protein operates within cofactor biosynthesis; pyridoxine 5'-phosphate biosynthesis; pyridoxine 5'-phosphate from D-erythrose 4-phosphate: step 5/5. Its function is as follows. Catalyzes the complicated ring closure reaction between the two acyclic compounds 1-deoxy-D-xylulose-5-phosphate (DXP) and 3-amino-2-oxopropyl phosphate (1-amino-acetone-3-phosphate or AAP) to form pyridoxine 5'-phosphate (PNP) and inorganic phosphate. The protein is Pyridoxine 5'-phosphate synthase of Synechococcus elongatus (strain ATCC 33912 / PCC 7942 / FACHB-805) (Anacystis nidulans R2).